The sequence spans 331 residues: Type 2 lactosamine alpha-2,3-sialyltransferase (331 aa).

The Cytoplasmic segment spans residues 1 to 4 (MRGY). A helical; Signal-anchor for type II membrane protein membrane pass occupies residues 5-25 (LVAIFLSAVFLYYVLHCILWG). Over 26 to 331 (TNVYWVAPVE…KNLVINLTQD (306 aa)) the chain is Lumenal. Residues N129, N181, N282, N295, N308, and N327 are each glycosylated (N-linked (GlcNAc...) asparagine).

Belongs to the glycosyltransferase 29 family. Ubiquitous.

It localises to the golgi apparatus membrane. The enzyme catalyses a neolactoside nLc4Cer(d18:1(4E)) + CMP-N-acetyl-beta-neuraminate = a neolactoside IV(3)-alpha-NeuAc-nLc4Cer(d18:1(4E)) + CMP + H(+). It carries out the reaction a beta-D-galactosyl-(1-&gt;4)-N-acetyl-beta-D-glucosaminyl derivative + CMP-N-acetyl-beta-neuraminate = an N-acetyl-alpha-neuraminyl-(2-&gt;3)-beta-D-galactosyl-(1-&gt;4)-N-acetyl-beta-D-glucosaminyl derivative + CMP + H(+). It catalyses the reaction a neolactoside nLc6Cer(d18:1(4E)) + CMP-N-acetyl-beta-neuraminate = a neolactoside VI(3)-alpha-NeuNAc-nLc6Cer(d18:1(4E)) + CMP + H(+). Its function is as follows. Transfers the sialyl residue from CMP-N-acetyl-beta-neuraminate to the terminal galactose residue on sugar chains of glycoproteins and glycolipids. It's alpha-2,3-sialyltransferase activity is specific toward type II glycan chains (Galbeta1-4GlcNAc) on glycoproteins and glycolipids such as neolactosides nLc4Cer and nLc6Cer, whose sialyl-products serve as precursors for the Lewis X antigen. Critically involved in the synthesis of functional selectin ligands needed for neutrophil recruitment during inflammation and lymphocyte homing to the lymph nodes. In Homo sapiens (Human), this protein is Type 2 lactosamine alpha-2,3-sialyltransferase (ST3GAL6).